Consider the following 185-residue polypeptide: Crossover junction endodeoxyribonuclease RuvC (185 aa).

Residues Asp16, Glu75, and Asp147 contribute to the active site. Positions 16, 75, and 147 each coordinate Mg(2+).

The protein belongs to the RuvC family. In terms of assembly, homodimer which binds Holliday junction (HJ) DNA. The HJ becomes 2-fold symmetrical on binding to RuvC with unstacked arms; it has a different conformation from HJ DNA in complex with RuvA. In the full resolvosome a probable DNA-RuvA(4)-RuvB(12)-RuvC(2) complex forms which resolves the HJ. Mg(2+) serves as cofactor.

Its subcellular location is the cytoplasm. The catalysed reaction is Endonucleolytic cleavage at a junction such as a reciprocal single-stranded crossover between two homologous DNA duplexes (Holliday junction).. The RuvA-RuvB-RuvC complex processes Holliday junction (HJ) DNA during genetic recombination and DNA repair. Endonuclease that resolves HJ intermediates. Cleaves cruciform DNA by making single-stranded nicks across the HJ at symmetrical positions within the homologous arms, yielding a 5'-phosphate and a 3'-hydroxyl group; requires a central core of homology in the junction. The consensus cleavage sequence is 5'-(A/T)TT(C/G)-3'. Cleavage occurs on the 3'-side of the TT dinucleotide at the point of strand exchange. HJ branch migration catalyzed by RuvA-RuvB allows RuvC to scan DNA until it finds its consensus sequence, where it cleaves and resolves the cruciform DNA. The polypeptide is Crossover junction endodeoxyribonuclease RuvC (Aromatoleum aromaticum (strain DSM 19018 / LMG 30748 / EbN1) (Azoarcus sp. (strain EbN1))).